The primary structure comprises 238 residues: IkB-like protein (238 aa).

ANK repeat units follow at residues 48–77 (GSSVFMWICIYGRIDFLKFLFEQESYPGEI), 86–115 (DGNSALHYLAEKKNHLILEEVLGYFGKNGT), 123–152 (NGMTPVMKAAIRGRTSNVLSLIKFGADPTQ), and 157–187 (RGFTAWDWAVFTGNMELVKSLNHDYQKPLYM). The Nuclear localization signal signature appears at 80 to 86 (PHRRDKD). The short motif at 202-213 (KKKPKIIITGCK) is the Nuclear localization signal element. Residues 205 to 212 (PKIIITGC) carry the PxIxITxC motif; Interaction with host PPP3CA motif. An FLCV motif motif is present at residues 227 to 230 (FLCV).

Belongs to the asfivirus A238L family. As to quaternary structure, interacts with host PPIA. Interacts with host PPP3CA/Calcineurin. Interacts with host RELA/p65; interaction of the 32 kDa form with host RELA results in the formation of a stable complex with NF-kappa-B. Interacts with host PPP3R1. Interacts with host EP300; this interaction inhibits the association of host EP300 with host RELA, JUN and NFATC2. Post-translationally, the protein exists in a 28 kDa and a 32 kDa form, probably due to post-translational modifications which are neither phosphorylation, nor sumoylation.

It localises to the host nucleus. The protein resides in the host cytoplasm. I-kappa-B- (IkB)-like protein that inhibits the binding of NF-kappa-B to DNA, thereby down-regulating pro-inflammatory cytokine production. Forms a heterodimer with the NF-kappa-B subunit RELA/p65 and prevents the activation of the NF-kappa-B transcription factor. Also inhibits the host calcineurin phosphatase activity, which is required for the induction of nuclear factor of activated T cells(NFAT)-dependent immune response genes. Inhibits calcineurin function, which is required for the induction of nuclear factor of activated T cells (NFAT)-dependent immune response genes. Prevents the binding of substrates to calcineurin without affecting the phosphatase activity. Does not contain the serine residues that are phosphorylated by host IkB kinase and thus is not degraded following stimulation of the NFkB pathway. In African swine fever virus (strain Badajoz 1971 Vero-adapted) (Ba71V), this protein is IkB-like protein (A238L).